Consider the following 241-residue polypeptide: DnaA regulatory inactivator Hda (241 aa).

It belongs to the DnaA family. HdA subfamily. As to quaternary structure, the active form seems to be an ADP-bound monomer. Forms the RIDA complex (regulatory inactivation of DnaA) of ATP-DnaA, ADP-Hda and the DNA-loaded beta sliding clamp (dnaN).

In terms of biological role, mediates the interaction of DNA replication initiator protein DnaA with DNA polymerase subunit beta sliding clamp (dnaN). Stimulates hydrolysis of ATP-DnaA to ADP-DnaA, rendering DnaA inactive for reinitiation, a process called regulatory inhibition of DnaA or RIDA. This chain is DnaA regulatory inactivator Hda, found in Citrobacter koseri (strain ATCC BAA-895 / CDC 4225-83 / SGSC4696).